Reading from the N-terminus, the 596-residue chain is Aspartate--tRNA(Asp/Asn) ligase (596 aa).

Glutamate 175 is a binding site for L-aspartate. The interval 199 to 202 (QQYK) is aspartate. Arginine 221 and histidine 454 together coordinate L-aspartate. 221–223 (RDE) contributes to the ATP binding site. Position 488 (glutamate 488) interacts with ATP. Position 495 (arginine 495) interacts with L-aspartate. 540 to 543 (GVDR) is an ATP binding site.

The protein belongs to the class-II aminoacyl-tRNA synthetase family. Type 1 subfamily. As to quaternary structure, homodimer.

The protein localises to the cytoplasm. It carries out the reaction tRNA(Asx) + L-aspartate + ATP = L-aspartyl-tRNA(Asx) + AMP + diphosphate. In terms of biological role, aspartyl-tRNA synthetase with relaxed tRNA specificity since it is able to aspartylate not only its cognate tRNA(Asp) but also tRNA(Asn). Reaction proceeds in two steps: L-aspartate is first activated by ATP to form Asp-AMP and then transferred to the acceptor end of tRNA(Asp/Asn). In Bartonella henselae (strain ATCC 49882 / DSM 28221 / CCUG 30454 / Houston 1) (Rochalimaea henselae), this protein is Aspartate--tRNA(Asp/Asn) ligase.